The following is a 270-amino-acid chain: Myelin protein zero-like protein 1 (270 aa).

The signal sequence occupies residues 1–35 (MAEAVGAVTLIAAPARRRWLWSALAAMLGLLTARI). Residues 36-151 (SALEVHTPKE…DIVVRPGQIR (116 aa)) enclose the Ig-like V-type domain. Over 36–162 (SALEVHTPKE…HVVEIDNLLV (127 aa)) the chain is Extracellular. N50 and N130 each carry an N-linked (GlcNAc...) asparagine glycan. Residues C58 and C135 are joined by a disulfide bond. The helical transmembrane segment at 163–183 (FLVWVVVGTVTAVVLGLTLLI) threads the bilayer. The Cytoplasmic segment spans residues 184–270 (SLVLVVLYRR…SVVYADIRKD (87 aa)). Residues 201–257 (TGCSTSERLSPVKQAPRKCPSDTEGLVKSPPSAGSHQGPVIYAQLDHSGGHHSGKIN) are disordered. Phosphoserine is present on residues S204, S206, S210, and S221. The ITIM motif 1 motif lies at 240 to 245 (VIYAQL). Y242 is modified (phosphotyrosine). S261 is subject to Phosphoserine. The short motif at 262–267 (VVYADI) is the ITIM motif 2 element. Position 264 is a phosphotyrosine (Y264).

It belongs to the myelin P0 protein family. As to quaternary structure, interacts with phosphorylated PTPN11/SHP-2. In terms of processing, phosphorylated on tyrosine residues upon stimulation with pervanadate and concanavalin-A (ConA). Phosphorylation at Tyr-242 and Tyr-264 is required for interaction with PTPN11/SHP-2. Dephosphorylated by PTPN11/SHP-2 (in vitro). N-glycosylated.

It is found in the membrane. Its function is as follows. Cell surface receptor, which is involved in signal transduction processes. Recruits PTPN11/SHP-2 to the cell membrane and is a putative substrate of PTPN11/SHP-2. Is a major receptor for concanavalin-A (ConA) and is involved in cellular signaling induced by ConA, which probably includes Src family tyrosine-protein kinases. May be involved in regulation of integrin-mediated cell motility. The sequence is that of Myelin protein zero-like protein 1 (Mpzl1) from Rattus norvegicus (Rat).